The chain runs to 300 residues: Transcription factor DUO1 (300 aa).

HTH myb-type domains lie at Lys-8–Leu-64 and Lys-65–Ala-116. 2 DNA-binding regions (H-T-H motif) span residues Trp-36–Leu-60 and Trp-89–Gln-112. A compositionally biased stretch (low complexity) spans Ser-123 to Ser-135. Residues Ser-123 to Val-145 are disordered. A compositionally biased stretch (basic residues) spans Ser-136–Val-145.

Confined to inflorescences, especially in stamens and pollen.

Its subcellular location is the nucleus. Transcription activator that acts as a positive regulator of male germline development by promoting both gametic cell specification and cell cycle progression. Binds to canonical MYB sites 5'-AACCGTC-3', 5'-AAACCGC-3' and 5'-AACCGT-3' in promoters to trigger the expression of male germline-specific or enriched genes (e.g. MGH3, GEX2 and GCS1), including those required for fertilization. Required for sperm cell specification leading to pollen maturation by activating a germline-specific regulon. Involved in pollen mitosis entry at G2-M transition via the regulation of CYCB1-1, DAZ1 and DAZ2 expression. The polypeptide is Transcription factor DUO1 (Arabidopsis thaliana (Mouse-ear cress)).